The primary structure comprises 733 residues: Protein OBERON 3 (733 aa).

Positions 1-15 (MIGEKDLAGDGECSR) are enriched in basic and acidic residues. Disordered stretches follow at residues 1–42 (MIGE…YHQK) and 118–142 (NPNS…KKSN). Residues 21–30 (PRFSNLNNQT) show a composition bias toward polar residues. The stretch at 120–153 (NSSKRKAHEEEEEAEEEEDKKSNKIETLNLSLAL) forms a coiled coil. A PHD-type zinc finger spans residues 436–500 (SCMCPVCLRF…MFHCIGCAHK (65 aa)). Positions 592–614 (VAAETSYRKDEASVTPSTSKDQK) are disordered. The stretch at 644–733 (MFQKKADEAR…RMEVTRQQLV (90 aa)) forms a coiled coil.

In terms of assembly, self-interacts. Interacts with OBE1 and OBE2. Interacts with OBE4.

The protein localises to the nucleus. Functionally, probable transcription factor that functions redundantly with OBE4 in specification of the hypophysis and establishment of the embryonic root. Involved in the activation of ARF5/MP-dependent gene expression during embryonic root meristem initiation. Involved in shoot meristem homeostasis. This chain is Protein OBERON 3, found in Arabidopsis thaliana (Mouse-ear cress).